The chain runs to 180 residues: Large ribosomal subunit protein uL5 (180 aa).

It belongs to the universal ribosomal protein uL5 family. In terms of assembly, part of the 50S ribosomal subunit; part of the 5S rRNA/L5/L18/L25 subcomplex. Contacts the 5S rRNA and the P site tRNA. Forms a bridge to the 30S subunit in the 70S ribosome.

Its function is as follows. This is one of the proteins that bind and probably mediate the attachment of the 5S RNA into the large ribosomal subunit, where it forms part of the central protuberance. In the 70S ribosome it contacts protein S13 of the 30S subunit (bridge B1b), connecting the 2 subunits; this bridge is implicated in subunit movement. Contacts the P site tRNA; the 5S rRNA and some of its associated proteins might help stabilize positioning of ribosome-bound tRNAs. In Cupriavidus metallidurans (strain ATCC 43123 / DSM 2839 / NBRC 102507 / CH34) (Ralstonia metallidurans), this protein is Large ribosomal subunit protein uL5.